We begin with the raw amino-acid sequence, 248 residues long: UPF0173 metal-dependent hydrolase Hlac_1347 (248 aa).

Belongs to the UPF0173 family.

The protein is UPF0173 metal-dependent hydrolase Hlac_1347 of Halorubrum lacusprofundi (strain ATCC 49239 / DSM 5036 / JCM 8891 / ACAM 34).